An 84-amino-acid chain; its full sequence is Small ribosomal subunit protein uS17 (84 aa).

Belongs to the universal ribosomal protein uS17 family. As to quaternary structure, part of the 30S ribosomal subunit.

Its function is as follows. One of the primary rRNA binding proteins, it binds specifically to the 5'-end of 16S ribosomal RNA. The polypeptide is Small ribosomal subunit protein uS17 (Nitrosomonas europaea (strain ATCC 19718 / CIP 103999 / KCTC 2705 / NBRC 14298)).